We begin with the raw amino-acid sequence, 49 residues long: Large ribosomal subunit protein bL33 (49 aa).

The protein belongs to the bacterial ribosomal protein bL33 family.

This chain is Large ribosomal subunit protein bL33, found in Clostridium beijerinckii (strain ATCC 51743 / NCIMB 8052) (Clostridium acetobutylicum).